A 190-amino-acid polypeptide reads, in one-letter code: Probable thymidylate kinase (190 aa).

7 to 14 (GIDGAGKT) is a binding site for ATP.

It belongs to the thymidylate kinase family.

The enzyme catalyses dTMP + ATP = dTDP + ADP. The chain is Probable thymidylate kinase from Thermoplasma volcanium (strain ATCC 51530 / DSM 4299 / JCM 9571 / NBRC 15438 / GSS1).